Here is a 272-residue protein sequence, read N- to C-terminus: Tryptophan synthase alpha chain (272 aa).

Residues glutamate 49 and aspartate 60 each act as proton acceptor in the active site.

It belongs to the TrpA family. In terms of assembly, tetramer of two alpha and two beta chains.

It carries out the reaction (1S,2R)-1-C-(indol-3-yl)glycerol 3-phosphate + L-serine = D-glyceraldehyde 3-phosphate + L-tryptophan + H2O. It participates in amino-acid biosynthesis; L-tryptophan biosynthesis; L-tryptophan from chorismate: step 5/5. The alpha subunit is responsible for the aldol cleavage of indoleglycerol phosphate to indole and glyceraldehyde 3-phosphate. In Hydrogenovibrio crunogenus (strain DSM 25203 / XCL-2) (Thiomicrospira crunogena), this protein is Tryptophan synthase alpha chain.